The sequence spans 101 residues: Small ribosomal subunit protein uS14 (101 aa).

This sequence belongs to the universal ribosomal protein uS14 family. As to quaternary structure, part of the 30S ribosomal subunit. Contacts proteins S3 and S10.

Functionally, binds 16S rRNA, required for the assembly of 30S particles and may also be responsible for determining the conformation of the 16S rRNA at the A site. The sequence is that of Small ribosomal subunit protein uS14 from Ruthia magnifica subsp. Calyptogena magnifica.